Reading from the N-terminus, the 463-residue chain is MPAEGACDAASLMTLTATLSDVTGLANLLKSVAIQTHAVVIASSSGLEIITELNRTLQAHAYLYSHMFDSYRFENAQDDVRGSTSLQARSRPKKRSKLTSKHAETADSQSSAASSDHESGQSQAHTKKRFRANSHSYAQEADRVHDEPDSVSFEVNLQTWISCLNIFGGVGPSRPHSSSSGLPGFRPEQGSAEAPPGGRGYQRTRYGVADAYGAERGTSVERGFDRNPFSSSAKATRMKLSYQGHGNPLVLELEQDANVLTRVSMSTYEPSFLTDMVFEPQNMVAQVIVASELMQSAFTEIDASCKKLSILITSPHSLSTYDGDQRTEAPAPTNRNTSASMLKFRAISDTGSSEMEFPASLTSSDPTGVIEKFVALPGSSEQWYDFTLLSRTMSVLRSSIKTSLRMDEAGLISFQFMMPKYRRAAAAGAPLTNAAAGQAAHEDEQDAFCEFLCCPLDTSTLIV.

Disordered stretches follow at residues 81–128 and 172–203; these read RGST…HTKK and PSRP…GYQR. Basic residues predominate over residues 90–100; the sequence is SRPKKRSKLTS.

It belongs to the rad1 family.

The protein resides in the nucleus. It catalyses the reaction Exonucleolytic cleavage in the 3'- to 5'-direction to yield nucleoside 5'-phosphates.. Its function is as follows. Plays a central role in regulating the genetic system of this fungus. Has a 3'--&gt;5' exonuclease activity. This chain is DNA repair exonuclease REC1 (REC1), found in Mycosarcoma maydis (Corn smut fungus).